Reading from the N-terminus, the 437-residue chain is Glutamate-1-semialdehyde 2,1-aminomutase (437 aa).

Lys273 is subject to N6-(pyridoxal phosphate)lysine.

The protein belongs to the class-III pyridoxal-phosphate-dependent aminotransferase family. HemL subfamily. Homodimer. Pyridoxal 5'-phosphate is required as a cofactor.

It localises to the cytoplasm. It carries out the reaction (S)-4-amino-5-oxopentanoate = 5-aminolevulinate. It functions in the pathway porphyrin-containing compound metabolism; protoporphyrin-IX biosynthesis; 5-aminolevulinate from L-glutamyl-tRNA(Glu): step 2/2. The chain is Glutamate-1-semialdehyde 2,1-aminomutase from Chlamydia abortus (strain DSM 27085 / S26/3) (Chlamydophila abortus).